The sequence spans 337 residues: Vegetative-specific protein H5 (337 aa).

Residues 88–90 carry the Involved in the stabilization of the negatively charged intermediate by the formation of the oxyanion hole motif; sequence HGG. Catalysis depends on residues serine 161, aspartate 261, and histidine 291.

It belongs to the 'GDXG' lipolytic enzyme family.

This Dictyostelium discoideum (Social amoeba) protein is Vegetative-specific protein H5 (cinB).